Consider the following 587-residue polypeptide: Aspartate--tRNA ligase (587 aa).

Glu174 is a binding site for L-aspartate. The interval 198-201 (QITK) is aspartate. An L-aspartate-binding site is contributed by Arg220. Residues 220-222 (RDE) and Gln229 contribute to the ATP site. His443 lines the L-aspartate pocket. Glu477 contacts ATP. Arg484 is an L-aspartate binding site. 529–532 (GLDR) contributes to the ATP binding site.

Belongs to the class-II aminoacyl-tRNA synthetase family. Type 1 subfamily. In terms of assembly, homodimer.

It is found in the cytoplasm. The catalysed reaction is tRNA(Asp) + L-aspartate + ATP = L-aspartyl-tRNA(Asp) + AMP + diphosphate. In terms of biological role, catalyzes the attachment of L-aspartate to tRNA(Asp) in a two-step reaction: L-aspartate is first activated by ATP to form Asp-AMP and then transferred to the acceptor end of tRNA(Asp). The polypeptide is Aspartate--tRNA ligase (Streptococcus pneumoniae serotype 2 (strain D39 / NCTC 7466)).